A 692-amino-acid polypeptide reads, in one-letter code: Elongation factor G (692 aa).

One can recognise a tr-type G domain in the interval 8 to 282 (ENTRNIGIMA…GVVDYLPSPL (275 aa)). Residues 17–24 (AHIDAGKT), 81–85 (DTPGH), and 135–138 (NKMD) contribute to the GTP site.

Belongs to the TRAFAC class translation factor GTPase superfamily. Classic translation factor GTPase family. EF-G/EF-2 subfamily.

The protein resides in the cytoplasm. Its function is as follows. Catalyzes the GTP-dependent ribosomal translocation step during translation elongation. During this step, the ribosome changes from the pre-translocational (PRE) to the post-translocational (POST) state as the newly formed A-site-bound peptidyl-tRNA and P-site-bound deacylated tRNA move to the P and E sites, respectively. Catalyzes the coordinated movement of the two tRNA molecules, the mRNA and conformational changes in the ribosome. In Geobacillus thermodenitrificans (strain NG80-2), this protein is Elongation factor G.